A 393-amino-acid chain; its full sequence is Formate-dependent phosphoribosylglycinamide formyltransferase (393 aa).

Residues 22–23 (EL) and E82 contribute to the N(1)-(5-phospho-beta-D-ribosyl)glycinamide site. ATP contacts are provided by residues R114, K155, 160 to 165 (SSGKGQ), 195 to 198 (ESFV), and E203. The 190-residue stretch at 119 to 308 (RLAAEEVGLK…EFALHVRAIL (190 aa)) folds into the ATP-grasp domain. E267 and E279 together coordinate Mg(2+). Residues D286, K356, and 363–364 (RR) contribute to the N(1)-(5-phospho-beta-D-ribosyl)glycinamide site.

The protein belongs to the PurK/PurT family. As to quaternary structure, homodimer.

It carries out the reaction N(1)-(5-phospho-beta-D-ribosyl)glycinamide + formate + ATP = N(2)-formyl-N(1)-(5-phospho-beta-D-ribosyl)glycinamide + ADP + phosphate + H(+). It participates in purine metabolism; IMP biosynthesis via de novo pathway; N(2)-formyl-N(1)-(5-phospho-D-ribosyl)glycinamide from N(1)-(5-phospho-D-ribosyl)glycinamide (formate route): step 1/1. In terms of biological role, involved in the de novo purine biosynthesis. Catalyzes the transfer of formate to 5-phospho-ribosyl-glycinamide (GAR), producing 5-phospho-ribosyl-N-formylglycinamide (FGAR). Formate is provided by PurU via hydrolysis of 10-formyl-tetrahydrofolate. The protein is Formate-dependent phosphoribosylglycinamide formyltransferase of Maridesulfovibrio salexigens (strain ATCC 14822 / DSM 2638 / NCIMB 8403 / VKM B-1763) (Desulfovibrio salexigens).